A 466-amino-acid chain; its full sequence is 3-isopropylmalate dehydratase large subunit (466 aa).

[4Fe-4S] cluster-binding residues include Cys347, Cys407, and Cys410.

The protein belongs to the aconitase/IPM isomerase family. LeuC type 1 subfamily. As to quaternary structure, heterodimer of LeuC and LeuD. [4Fe-4S] cluster serves as cofactor.

The catalysed reaction is (2R,3S)-3-isopropylmalate = (2S)-2-isopropylmalate. The protein operates within amino-acid biosynthesis; L-leucine biosynthesis; L-leucine from 3-methyl-2-oxobutanoate: step 2/4. Catalyzes the isomerization between 2-isopropylmalate and 3-isopropylmalate, via the formation of 2-isopropylmaleate. This is 3-isopropylmalate dehydratase large subunit from Vibrio campbellii (strain ATCC BAA-1116).